Here is a 118-residue protein sequence, read N- to C-terminus: Ribosome-binding factor A (118 aa).

It belongs to the RbfA family. In terms of assembly, monomer. Binds 30S ribosomal subunits, but not 50S ribosomal subunits or 70S ribosomes.

The protein resides in the cytoplasm. In terms of biological role, one of several proteins that assist in the late maturation steps of the functional core of the 30S ribosomal subunit. Associates with free 30S ribosomal subunits (but not with 30S subunits that are part of 70S ribosomes or polysomes). Required for efficient processing of 16S rRNA. May interact with the 5'-terminal helix region of 16S rRNA. The protein is Ribosome-binding factor A of Clostridium beijerinckii (strain ATCC 51743 / NCIMB 8052) (Clostridium acetobutylicum).